Consider the following 293-residue polypeptide: 4-hydroxy-tetrahydrodipicolinate synthase (293 aa).

Thr47 is a binding site for pyruvate. Catalysis depends on Tyr136, which acts as the Proton donor/acceptor. The Schiff-base intermediate with substrate role is filled by Lys164. Ile206 lines the pyruvate pocket.

The protein belongs to the DapA family. In terms of assembly, homotetramer; dimer of dimers.

It localises to the cytoplasm. The catalysed reaction is L-aspartate 4-semialdehyde + pyruvate = (2S,4S)-4-hydroxy-2,3,4,5-tetrahydrodipicolinate + H2O + H(+). It participates in amino-acid biosynthesis; L-lysine biosynthesis via DAP pathway; (S)-tetrahydrodipicolinate from L-aspartate: step 3/4. Functionally, catalyzes the condensation of (S)-aspartate-beta-semialdehyde [(S)-ASA] and pyruvate to 4-hydroxy-tetrahydrodipicolinate (HTPA). In Listeria monocytogenes serotype 4b (strain CLIP80459), this protein is 4-hydroxy-tetrahydrodipicolinate synthase.